Consider the following 252-residue polypeptide: Centromere protein V (252 aa).

The interval 1–80 (MRRTRSAVAT…EEPPPAVTPA (80 aa)) is disordered. Serine 18 bears the Phosphoserine mark. Arginine 39 is subject to Omega-N-methylarginine. Pro residues predominate over residues 54–64 (SAKPRPKPPPR). Residue threonine 78 is modified to Phosphothreonine. Residues 125-237 (HTGGCHCGAV…TEEFNGSDWE (113 aa)) enclose the CENP-V/GFA domain. Zn(2+)-binding residues include cysteine 129, cysteine 131, cysteine 149, cysteine 151, cysteine 154, cysteine 193, and cysteine 196. Serine 234 is modified (phosphoserine).

The protein belongs to the Gfa family. It depends on Zn(2+) as a cofactor.

It is found in the chromosome. Its subcellular location is the centromere. The protein localises to the kinetochore. It localises to the nucleus. The protein resides in the cytoplasm. It is found in the cytoskeleton. Its subcellular location is the spindle. Required for distribution of pericentromeric heterochromatin in interphase nuclei and for centromere formation and organization, chromosome alignment and cytokinesis. In Mus musculus (Mouse), this protein is Centromere protein V (Cenpv).